The sequence spans 235 residues: Glial cell line-derived neurotrophic factor (235 aa).

The N-terminal stretch at 1–19 (MKLWDILATCLLLLSSVST) is a signal peptide. The propeptide occupies 20–87 (RPLFHKLQPS…DFIEATLGRL (68 aa)). Disordered regions lie at residues 34-60 (VRSESPALDPIIDSQPETSNPKQASME) and 91-137 (SDVE…RVKG). Basic residues predominate over residues 119–128 (GERKRSRGRA). 3 disulfides stabilise this stretch: cysteine 142–cysteine 203, cysteine 169–cysteine 232, and cysteine 173–cysteine 234. Residues asparagine 150 and asparagine 186 are each glycosylated (N-linked (GlcNAc...) asparagine).

The protein belongs to the TGF-beta family. GDNF subfamily. Homodimer; disulfide-linked. Interacts with GFRA1 coreceptor and RET: forms a 2:2:2 ternary complex composed of GDNF ligand, GFRA1 and RET receptor. First expressed at 14 hours post-fertilization (hpf) in the ventral half of anterior somites and in intermediate mesoderm. Ventral somitic expression persists and extends more posteriorly over the next 12 hours. Expressed throughout the ventral trunk mesoderm and endoderm at 24 hpf. By 30 hpf, somitic expression ceases and by 36 hpf, expression becomes restricted to the endodermal cells forming the gut, with expression along the whole length of the developing gut tube at 72 hpf.

Its subcellular location is the secreted. In terms of biological role, neurotrophic factor that enhances survival and morphological differentiation of dopaminergic neurons and increases their high-affinity dopamine uptake. Acts by binding to its coreceptor, GFRA1, leading to autophosphorylation and activation of the RET receptor. The chain is Glial cell line-derived neurotrophic factor from Danio rerio (Zebrafish).